The primary structure comprises 491 residues: Ketol-acid reductoisomerase (NADP(+)) (491 aa).

Residues 15–208 (AQLGKCRFMA…GGHRAGVLES (194 aa)) enclose the KARI N-terminal Rossmann domain. Residues 45–48 (CGAQ), arginine 68, arginine 76, serine 78, and 108–110 (DKQ) each bind NADP(+). Residue histidine 132 is part of the active site. Glycine 158 provides a ligand contact to NADP(+). KARI C-terminal knotted domains follow at residues 209-344 (SFVA…TASQ) and 345-484 (FDGK…MKDM). 4 residues coordinate Mg(2+): aspartate 217, glutamate 221, glutamate 389, and glutamate 393. Serine 414 is a substrate binding site.

Belongs to the ketol-acid reductoisomerase family. Mg(2+) is required as a cofactor.

It carries out the reaction (2R)-2,3-dihydroxy-3-methylbutanoate + NADP(+) = (2S)-2-acetolactate + NADPH + H(+). The enzyme catalyses (2R,3R)-2,3-dihydroxy-3-methylpentanoate + NADP(+) = (S)-2-ethyl-2-hydroxy-3-oxobutanoate + NADPH + H(+). Its pathway is amino-acid biosynthesis; L-isoleucine biosynthesis; L-isoleucine from 2-oxobutanoate: step 2/4. It participates in amino-acid biosynthesis; L-valine biosynthesis; L-valine from pyruvate: step 2/4. Functionally, involved in the biosynthesis of branched-chain amino acids (BCAA). Catalyzes an alkyl-migration followed by a ketol-acid reduction of (S)-2-acetolactate (S2AL) to yield (R)-2,3-dihydroxy-isovalerate. In the isomerase reaction, S2AL is rearranged via a Mg-dependent methyl migration to produce 3-hydroxy-3-methyl-2-ketobutyrate (HMKB). In the reductase reaction, this 2-ketoacid undergoes a metal-dependent reduction by NADPH to yield (R)-2,3-dihydroxy-isovalerate. This is Ketol-acid reductoisomerase (NADP(+)) from Enterobacter sp. (strain 638).